The following is a 50-amino-acid chain: Ampulexin 1 (50 aa).

The signal sequence occupies residues 1 to 26 (MKAIMVLFYVMMLTIIASVSMVNGSP).

Monomer. As to expression, expressed in venom sac and, to a lesser extent, in venom gland. Not expressed in brain.

It is found in the secreted. Its function is as follows. Amphipathic peptide which probably adopts an alpha-helical structure. When injected in subesophageal ganglia of cockroach P.americana, a natural host for larvae of A.compressa, dampens the escape response for about 1 hour which may contribute to early stages of hypokinesia. Has no antimicrobial activity against E.coli DH5alpha or B.thuringiensis. Is not cytotoxic in vitro. The sequence is that of Ampulexin 1 from Ampulex compressa (Emerald cockroach wasp).